The primary structure comprises 101 residues: Small ribosomal subunit protein bS18c (101 aa).

Belongs to the bacterial ribosomal protein bS18 family. As to quaternary structure, part of the 30S ribosomal subunit.

The protein resides in the plastid. It localises to the chloroplast. This is Small ribosomal subunit protein bS18c from Guizotia abyssinica (Niger).